A 538-amino-acid chain; its full sequence is Carotenoid 9,10(9',10')-cleavage dioxygenase 1 (538 aa).

4 residues coordinate Fe cation: His-222, His-270, His-336, and His-523.

The protein belongs to the carotenoid oxygenase family. In terms of assembly, homodimer. Requires Fe(2+) as cofactor. In terms of tissue distribution, high expression in flowers and siliques. Also detected in stems, leaves and roots.

It is found in the cytoplasm. The catalysed reaction is all-trans-zeaxanthin + 2 O2 = 4,9-dimethyldodeca-2,4,6,8,10-pentaenedial + 2 (3R)-hydroxy-beta-ionone. In terms of biological role, cleaves a variety of carotenoids symmetrically at both the 9-10 and 9'-10' double bonds. Active on beta,beta-carotene, lutein, zeaxanthin, all-trans-violaxanthin, 9-cis-violaxanthin and 9'-cis-neoxanthin. With most substrates, the carotenoid is symmetrically cleaved. Probably not involved in abscisic acid biosynthesis. The chain is Carotenoid 9,10(9',10')-cleavage dioxygenase 1 (CCD1) from Arabidopsis thaliana (Mouse-ear cress).